Here is a 474-residue protein sequence, read N- to C-terminus: UDP-N-acetylmuramate--L-alanine ligase (474 aa).

Position 119–125 (119–125) interacts with ATP; it reads GTHGKTT.

The protein belongs to the MurCDEF family.

The protein resides in the cytoplasm. It carries out the reaction UDP-N-acetyl-alpha-D-muramate + L-alanine + ATP = UDP-N-acetyl-alpha-D-muramoyl-L-alanine + ADP + phosphate + H(+). It participates in cell wall biogenesis; peptidoglycan biosynthesis. Its function is as follows. Cell wall formation. The sequence is that of UDP-N-acetylmuramate--L-alanine ligase from Jannaschia sp. (strain CCS1).